Here is a 412-residue protein sequence, read N- to C-terminus: MTTFPFAPSWLDELPARLAELDAVHLRRRRRTVRPLQGAHLDVDGQPMLAFCSNDYLGLAGHPALADAACAGAREFGVGSGGSPLVSGHSQANAALEADLARFVQLPRALYFYAGYATNTGIVPALVGAGDALFSDALNHACLIDGARLSRATIHRYPHGDLAALEALLAASPARRKLVVSDAVFSMDGDVADIRTLHALCERHDALLLLDDAHGFGVLGPQGRGALAEAGLTGQRASQRVLYMATLGKAAGAAGAFVAGSEVLIEWLLQKTRSYIFATAAPALLARTLQASLGLIERGDALRAHLDARIAQLRAGLVPVLQGTHWELGTSRTAVQALVIGANDEALAAMEALRARGLWVPAIRPPTVPEGTARLRIALSAAHTEADVARLVDALADIAPTARSALPQEAAA.

Arg-28 is a binding site for substrate. Residue 115–116 coordinates pyridoxal 5'-phosphate; the sequence is GY. His-140 contacts substrate. Residues Ser-186, His-214, and Thr-246 each coordinate pyridoxal 5'-phosphate. N6-(pyridoxal phosphate)lysine is present on Lys-249. Thr-367 contacts substrate.

It belongs to the class-II pyridoxal-phosphate-dependent aminotransferase family. BioF subfamily. In terms of assembly, homodimer. Pyridoxal 5'-phosphate serves as cofactor.

The catalysed reaction is 6-carboxyhexanoyl-[ACP] + L-alanine + H(+) = (8S)-8-amino-7-oxononanoate + holo-[ACP] + CO2. It functions in the pathway cofactor biosynthesis; biotin biosynthesis. Its function is as follows. Catalyzes the decarboxylative condensation of pimeloyl-[acyl-carrier protein] and L-alanine to produce 8-amino-7-oxononanoate (AON), [acyl-carrier protein], and carbon dioxide. The polypeptide is 8-amino-7-oxononanoate synthase (Paracidovorax citrulli (strain AAC00-1) (Acidovorax citrulli)).